A 140-amino-acid chain; its full sequence is Flagellar assembly factor FliW (140 aa).

This sequence belongs to the FliW family. In terms of assembly, interacts with translational regulator CsrA and flagellin(s).

The protein localises to the cytoplasm. Acts as an anti-CsrA protein, binds CsrA and prevents it from repressing translation of its target genes, one of which is flagellin. Binds to flagellin and participates in the assembly of the flagellum. The protein is Flagellar assembly factor FliW of Syntrophotalea carbinolica (strain DSM 2380 / NBRC 103641 / GraBd1) (Pelobacter carbinolicus).